Reading from the N-terminus, the 484-residue chain is Alkaline nuclease (484 aa).

Belongs to the herpesviridae alkaline nuclease family. In terms of assembly, interacts with major DNA-binding protein; this interaction increases the nuclease processivity of the alkaline exonuclease.

Its subcellular location is the host nucleus. It is found in the host cytoplasm. In terms of biological role, plays a role in processing non linear or branched viral DNA intermediates in order to promote the production of mature packaged unit-length linear progeny viral DNA molecules. Exhibits endonuclease and exonuclease activities and accepts both double-stranded and single-stranded DNA as substrate. Exonuclease digestion of DNA is in the 5'-&gt; 3' direction and the products are 5'-monophosphate nucleosides. Additionally, forms a recombinase with the major DNA-binding protein, which displays strand exchange activity. The polypeptide is Alkaline nuclease (Elephas maximus (Indian elephant)).